A 135-amino-acid polypeptide reads, in one-letter code: uncharacterized protein (135 aa).

A helical membrane pass occupies residues 4–24 (LGVFLILASIVCGVVAICGCT).

The protein resides in the membrane. This is an uncharacterized protein from Methanocaldococcus jannaschii (strain ATCC 43067 / DSM 2661 / JAL-1 / JCM 10045 / NBRC 100440) (Methanococcus jannaschii).